We begin with the raw amino-acid sequence, 27 residues long: Secretin (27 aa).

Residue Val-27 is modified to Valine amide.

This sequence belongs to the glucagon family.

It is found in the secreted. In terms of biological role, hormone involved in different processes, such as regulation of the pH of the duodenal content, food intake and water homeostasis. Exerts its biological effects by binding to secretin receptor (SCTR), a G-protein coupled receptor expressed in the basolateral domain of several cells. Acts as a key gastrointestinal hormone by regulating the pH of the duodenal content. Secreted by S cells of the duodenum in the crypts of Lieberkuehn and regulates the pH of the duodenum by (1) inhibiting the secretion of gastric acid from the parietal cells of the stomach and (2) stimulating the production of bicarbonate (NaHCO(3)) from the ductal cells of the pancreas. Production of bicarbonate is essential to neutralize the pH and ensure no damage is done to the small intestine by the gastric acid. In addition to regulating the pH of the duodenal content, plays a central role in diet induced thermogenesis: acts as a non-sympathetic brown fat (BAT) activator mediating prandial thermogenesis, which consequentially induces satiation. Mechanistically, secretin released by the gut after a meal binds to secretin receptor (SCTR) in brown adipocytes, activating brown fat thermogenesis by stimulating lipolysis, which is sensed in the brain and promotes satiation. Also able to stimulate lipolysis in white adipocytes. Also plays an important role in cellular osmoregulation: released into the systemic circulation in response to hyperosmolality and acts at different levels in the hypothalamus, pituitary and kidney to regulate water homeostasis. Also plays a role in the central nervous system, possibly by acting as a neuropeptide hormone: required for hippocampal synaptic function and neural progenitor cells maintenance. The protein is Secretin of Canis lupus familiaris (Dog).